We begin with the raw amino-acid sequence, 379 residues long: Queuine tRNA-ribosyltransferase (379 aa).

Asp94 serves as the catalytic Proton acceptor. Residues 94–98 (DSGGF), Asp148, Gln191, and Gly218 each bind substrate. The segment at 249–255 (GVGSPDA) is RNA binding. Asp268 serves as the catalytic Nucleophile. The segment at 273 to 277 (TRIAR) is RNA binding; important for wobble base 34 recognition. 4 residues coordinate Zn(2+): Cys306, Cys308, Cys311, and His337.

The protein belongs to the queuine tRNA-ribosyltransferase family. As to quaternary structure, homodimer. Within each dimer, one monomer is responsible for RNA recognition and catalysis, while the other monomer binds to the replacement base PreQ1. Zn(2+) is required as a cofactor.

The enzyme catalyses 7-aminomethyl-7-carbaguanine + guanosine(34) in tRNA = 7-aminomethyl-7-carbaguanosine(34) in tRNA + guanine. It functions in the pathway tRNA modification; tRNA-queuosine biosynthesis. Catalyzes the base-exchange of a guanine (G) residue with the queuine precursor 7-aminomethyl-7-deazaguanine (PreQ1) at position 34 (anticodon wobble position) in tRNAs with GU(N) anticodons (tRNA-Asp, -Asn, -His and -Tyr). Catalysis occurs through a double-displacement mechanism. The nucleophile active site attacks the C1' of nucleotide 34 to detach the guanine base from the RNA, forming a covalent enzyme-RNA intermediate. The proton acceptor active site deprotonates the incoming PreQ1, allowing a nucleophilic attack on the C1' of the ribose to form the product. After dissociation, two additional enzymatic reactions on the tRNA convert PreQ1 to queuine (Q), resulting in the hypermodified nucleoside queuosine (7-(((4,5-cis-dihydroxy-2-cyclopenten-1-yl)amino)methyl)-7-deazaguanosine). This chain is Queuine tRNA-ribosyltransferase, found in Oceanobacillus iheyensis (strain DSM 14371 / CIP 107618 / JCM 11309 / KCTC 3954 / HTE831).